The primary structure comprises 78 residues: Large ribosomal subunit protein bL28 (78 aa).

The protein belongs to the bacterial ribosomal protein bL28 family.

The protein is Large ribosomal subunit protein bL28 of Bordetella avium (strain 197N).